A 392-amino-acid polypeptide reads, in one-letter code: L-serine phosphate decarboxylase (392 aa).

The interval 22 to 29 (NAGSHSPS) is required for catalytic activity. Position 180 (N180) interacts with O-phospho-L-serine. K243 is subject to N6-(pyridoxal phosphate)lysine. Positions 354 and 368 each coordinate O-phospho-L-serine.

It belongs to the class-II pyridoxal-phosphate-dependent aminotransferase family. Homodimer. Requires pyridoxal 5'-phosphate as cofactor.

It catalyses the reaction O-phospho-L-serine + H(+) = phosphoethanolamine + CO2. The protein operates within cofactor biosynthesis. Its function is as follows. Pyridoxal phosphate (PLP)-dependent decarboxylase involved in the biosynthesis of norcobamides, cofactors in the tetrachloroethene reductive dehalogenase PceA of S.multivorans. Catalyzes the decarboxylation of L-serine O-phosphate to ethanolamine O-phosphate, the precursor for the linkage between the nucleotide loop and the corrin ring in norcobamide. Less active with L-threonine phosphate. No activity with L-serine or L-threonine. Has no aminotransferase activity as no production of L-glutamate with L-histidinol phosphate and 2-oxoglutarate as substrates. Complements growth defects in the S.enterica cobD deletion mutant, but of the cobamides, the norpseudo-vitamin B12 (norpseudo-B12) rather than the pseudo-B12 is produced in the mutant. However, addition of L-threonine phosphate to the culture minimal medium of the mutant results in formation of also the pseudo-B12, indicating the dual substrate specificity of this enzyme. The polypeptide is L-serine phosphate decarboxylase (Sulfurospirillum multivorans (strain DM 12446 / JCM 15788 / NBRC 109480)).